The following is a 256-amino-acid chain: Thiazole synthase (256 aa).

The active-site Schiff-base intermediate with DXP is Lys95. 1-deoxy-D-xylulose 5-phosphate contacts are provided by residues Gly156, 182-183 (AG), and 204-205 (NT).

This sequence belongs to the ThiG family. In terms of assembly, homotetramer. Forms heterodimers with either ThiH or ThiS.

The protein localises to the cytoplasm. The enzyme catalyses [ThiS sulfur-carrier protein]-C-terminal-Gly-aminoethanethioate + 2-iminoacetate + 1-deoxy-D-xylulose 5-phosphate = [ThiS sulfur-carrier protein]-C-terminal Gly-Gly + 2-[(2R,5Z)-2-carboxy-4-methylthiazol-5(2H)-ylidene]ethyl phosphate + 2 H2O + H(+). Its pathway is cofactor biosynthesis; thiamine diphosphate biosynthesis. Its function is as follows. Catalyzes the rearrangement of 1-deoxy-D-xylulose 5-phosphate (DXP) to produce the thiazole phosphate moiety of thiamine. Sulfur is provided by the thiocarboxylate moiety of the carrier protein ThiS. In vitro, sulfur can be provided by H(2)S. The protein is Thiazole synthase of Klebsiella pneumoniae subsp. pneumoniae (strain ATCC 700721 / MGH 78578).